A 130-amino-acid polypeptide reads, in one-letter code: Small ribosomal subunit protein uS8 (130 aa).

This sequence belongs to the universal ribosomal protein uS8 family. Part of the 30S ribosomal subunit. Contacts proteins S5 and S12.

Functionally, one of the primary rRNA binding proteins, it binds directly to 16S rRNA central domain where it helps coordinate assembly of the platform of the 30S subunit. The polypeptide is Small ribosomal subunit protein uS8 (Haemophilus influenzae (strain 86-028NP)).